Here is a 563-residue protein sequence, read N- to C-terminus: Arginine--tRNA ligase (563 aa).

Positions 121–131 match the 'HIGH' region motif; it reads PNIAKPFSIGH.

It belongs to the class-I aminoacyl-tRNA synthetase family. As to quaternary structure, monomer.

It localises to the cytoplasm. It catalyses the reaction tRNA(Arg) + L-arginine + ATP = L-arginyl-tRNA(Arg) + AMP + diphosphate. This Streptococcus equi subsp. equi (strain 4047) protein is Arginine--tRNA ligase.